A 527-amino-acid polypeptide reads, in one-letter code: Oviduct-specific glycoprotein (527 aa).

Positions M1–A21 are cleaved as a signal peptide. The GH18 domain maps to H22–A385. C26 and C51 are disulfide-bonded. N62 carries an N-linked (GlcNAc...) asparagine glycan. Chitin contacts are provided by residues A71–R72, G98–N101, Y142, L211–D214, and W355. 2 N-linked (GlcNAc...) asparagine glycosylation sites follow: N402 and N441. The interval T433–D527 is disordered.

It belongs to the glycosyl hydrolase 18 family. As to expression, oviduct.

Its subcellular location is the cytoplasmic vesicle. The protein resides in the secretory vesicle. In terms of biological role, binds to oocyte zona pellucida in vivo. May play a role in the fertilization process and/or early embryonic development. The chain is Oviduct-specific glycoprotein (OVGP1) from Sus scrofa (Pig).